A 91-amino-acid chain; its full sequence is Small ribosomal subunit protein uS19 (91 aa).

It belongs to the universal ribosomal protein uS19 family.

Its function is as follows. Protein S19 forms a complex with S13 that binds strongly to the 16S ribosomal RNA. The polypeptide is Small ribosomal subunit protein uS19 (Opitutus terrae (strain DSM 11246 / JCM 15787 / PB90-1)).